We begin with the raw amino-acid sequence, 605 residues long: Ankyrin repeat domain-containing protein 13D (605 aa).

ANK repeat units lie at residues 39–68 and 72–101; these read RGRT…NVGK and QGWA…YQRA. The tract at residues 306–333 is disordered; the sequence is AQQHSSHTGAPVQQAASPTNPTAISPEE. Residues 319–328 show a composition bias toward polar residues; it reads QAASPTNPTA. UIM domains lie at 482 to 501 and 528 to 547; these read EDDD…AGTE and EEQL…STEP. Positions 541–605 are disordered; sequence LQLSTEPRGP…RILQLSLTEH (65 aa). Positions 550-563 are enriched in pro residues; the sequence is PGSPPRTPPAPGPP. A Phosphoserine modification is found at S552. A Phosphothreonine modification is found at T556. Low complexity predominate over residues 564–575; the sequence is SFEEQLRLALEL. UIM domains lie at 564–583 and 589–605; these read SFEE…QEER and QEEE…LTEH. Basic and acidic residues predominate over residues 576–589; it reads SSREQEERERRGQQ.

Interacts with EGFR (ubiquitinated); the interaction is direct and may regulate EGFR internalization.

The protein resides in the cell membrane. It localises to the late endosome. Functionally, ubiquitin-binding protein that specifically recognizes and binds 'Lys-63'-linked ubiquitin. Does not bind 'Lys-48'-linked ubiquitin. Positively regulates the internalization of ligand-activated EGFR by binding to the Ub moiety of ubiquitinated EGFR at the cell membrane. This chain is Ankyrin repeat domain-containing protein 13D (ANKRD13D), found in Homo sapiens (Human).